The primary structure comprises 201 residues: Receptor expression-enhancing protein 6 (201 aa).

The next 3 helical transmembrane spans lie at 36 to 56, 89 to 109, and 117 to 137; these read LAAGALALLGLYLLFGYGASL, WVVYALFGLVEFFSDLLLFWF, and CAFLLFCMTPGPWNGALLLYH.

The protein belongs to the DP1 family. As to quaternary structure, interacts with STX3. Interacts with clathrin. In terms of tissue distribution, expressed in the inner segment of rod photoreceptors and outer plexiform layer of the retina (at protein level). Expressed in liver, but not detected in brain, muscle, kidney, retinal cone photoreceptors or retinal ganglion cells (at protein level). Highly expressed in the ganglion cell layer of the retina and in liver, and also detected at low levels in kidney and testis. Isoform 1: Expressed in the retina. Isoform 2: Expressed in liver.

It is found in the endoplasmic reticulum membrane. It localises to the cytoplasmic vesicle. Its subcellular location is the clathrin-coated vesicle membrane. Required for correct function and survival of retinal photoreceptors. Required for retinal development. In rod photoreceptors, facilitates stability and/or trafficking of guanylate cyclases and is required to maintain endoplasmic reticulum and mitochondrial homeostasis. May play a role in clathrin-coated intracellular vesicle trafficking of proteins from the endoplasmic reticulum to the retinal rod plasma membrane. This chain is Receptor expression-enhancing protein 6 (Reep6), found in Mus musculus (Mouse).